The following is a 311-amino-acid chain: Aspartate carbamoyltransferase catalytic subunit (311 aa).

The carbamoyl phosphate site is built by Arg-55 and Thr-56. Lys-85 contributes to the L-aspartate binding site. Residues Arg-106, His-135, and Gln-138 each contribute to the carbamoyl phosphate site. Residues Arg-168 and Arg-230 each coordinate L-aspartate. Carbamoyl phosphate is bound by residues Leu-268 and Pro-269.

Belongs to the aspartate/ornithine carbamoyltransferase superfamily. ATCase family. Heterododecamer (2C3:3R2) of six catalytic PyrB chains organized as two trimers (C3), and six regulatory PyrI chains organized as three dimers (R2).

The catalysed reaction is carbamoyl phosphate + L-aspartate = N-carbamoyl-L-aspartate + phosphate + H(+). Its pathway is pyrimidine metabolism; UMP biosynthesis via de novo pathway; (S)-dihydroorotate from bicarbonate: step 2/3. Functionally, catalyzes the condensation of carbamoyl phosphate and aspartate to form carbamoyl aspartate and inorganic phosphate, the committed step in the de novo pyrimidine nucleotide biosynthesis pathway. This is Aspartate carbamoyltransferase catalytic subunit from Citrobacter koseri (strain ATCC BAA-895 / CDC 4225-83 / SGSC4696).